The sequence spans 712 residues: Polyribonucleotide nucleotidyltransferase (712 aa).

Mg(2+) is bound by residues aspartate 485 and aspartate 491. The 60-residue stretch at 552–611 folds into the KH domain; sequence PRIHTMKIDPKKIKDVIGKGGAVIRSLTEETGTSIDIDDDGTVKIAATDNNAAKMVMSRI. Positions 621-689 constitute an S1 motif domain; it reads NAIYTGKVSR…RQNRIRLTMK (69 aa).

Belongs to the polyribonucleotide nucleotidyltransferase family. In terms of assembly, component of the RNA degradosome, which is a multiprotein complex involved in RNA processing and mRNA degradation. Mg(2+) is required as a cofactor.

The protein resides in the cytoplasm. It carries out the reaction RNA(n+1) + phosphate = RNA(n) + a ribonucleoside 5'-diphosphate. Involved in mRNA degradation. Catalyzes the phosphorolysis of single-stranded polyribonucleotides processively in the 3'- to 5'-direction. This is Polyribonucleotide nucleotidyltransferase from Haemophilus ducreyi (strain 35000HP / ATCC 700724).